Reading from the N-terminus, the 503-residue chain is Glycerol kinase (503 aa).

Residue Thr-14 participates in ADP binding. Thr-14, Thr-15, and Ser-16 together coordinate ATP. Thr-14 contacts sn-glycerol 3-phosphate. Residue Arg-18 participates in ADP binding. Residues Arg-84, Glu-85, Tyr-136, and Asp-246 each contribute to the sn-glycerol 3-phosphate site. Positions 84, 85, 136, 246, and 247 each coordinate glycerol. 2 residues coordinate ADP: Thr-268 and Gly-311. ATP-binding residues include Thr-268, Gly-311, Gln-315, and Gly-412. The ADP site is built by Gly-412 and Asn-416.

Belongs to the FGGY kinase family.

It catalyses the reaction glycerol + ATP = sn-glycerol 3-phosphate + ADP + H(+). It participates in polyol metabolism; glycerol degradation via glycerol kinase pathway; sn-glycerol 3-phosphate from glycerol: step 1/1. Its activity is regulated as follows. Inhibited by fructose 1,6-bisphosphate (FBP). Functionally, key enzyme in the regulation of glycerol uptake and metabolism. Catalyzes the phosphorylation of glycerol to yield sn-glycerol 3-phosphate. This Haemophilus influenzae (strain 86-028NP) protein is Glycerol kinase.